The chain runs to 194 residues: Peptidyl-tRNA hydrolase (194 aa).

Y17 provides a ligand contact to tRNA. The active-site Proton acceptor is H22. Positions 68, 70, and 116 each coordinate tRNA.

Belongs to the PTH family. As to quaternary structure, monomer.

The protein resides in the cytoplasm. The enzyme catalyses an N-acyl-L-alpha-aminoacyl-tRNA + H2O = an N-acyl-L-amino acid + a tRNA + H(+). Its function is as follows. Hydrolyzes ribosome-free peptidyl-tRNAs (with 1 or more amino acids incorporated), which drop off the ribosome during protein synthesis, or as a result of ribosome stalling. Catalyzes the release of premature peptidyl moieties from peptidyl-tRNA molecules trapped in stalled 50S ribosomal subunits, and thus maintains levels of free tRNAs and 50S ribosomes. The protein is Peptidyl-tRNA hydrolase of Pseudomonas paraeruginosa (strain DSM 24068 / PA7) (Pseudomonas aeruginosa (strain PA7)).